The primary structure comprises 82 residues: Large ribosomal subunit protein bL27 (82 aa).

The segment at 1–21 (MAHKKGASSSRNGRDSNAKRL) is disordered.

This sequence belongs to the bacterial ribosomal protein bL27 family.

This Tropheryma whipplei (strain TW08/27) (Whipple's bacillus) protein is Large ribosomal subunit protein bL27.